We begin with the raw amino-acid sequence, 265 residues long: SPbeta prophage-derived uncharacterized protein YomU (265 aa).

The segment at 238–265 (KADGTKGVVTSDEGTGSSQSSDLGGTTE) is disordered. Residues 249–265 (DEGTGSSQSSDLGGTTE) are compositionally biased toward polar residues.

In Bacillus subtilis (strain 168), this protein is SPbeta prophage-derived uncharacterized protein YomU (yomU).